We begin with the raw amino-acid sequence, 640 residues long: PTS system mannitol-specific EIICBA component (640 aa).

The 332-residue stretch at 12–343 (LGRFLSAMIM…LKISNRNHYV (332 aa)) folds into the PTS EIIC type-2 domain. Helical transmembrane passes span 24-45 (ISVFIAWGIISGLFIKSGWCPN), 50-70 (KVLSPISVYLFPILIANTGGY), 134-155 (SVGILGVLLLFISFLCIGPMIE), 165-185 (VNLMINNHLLPFIAILIEPAK), 273-292 (LILGSITGIFILIVLRGGLI), and 313-334 (VINLLAIIISFLVSFLVSCMLL). The PTS EIIB type-2 domain occupies 379-475 (RNIIFACDAG…YLVENNLDNN (97 aa)). C385 (phosphocysteine intermediate; for EIIB activity) is an active-site residue. C385 carries the post-translational modification Phosphocysteine; by EIIA. In terms of domain architecture, PTS EIIA type-2 spans 496–638 (FSLTKENIFL…DDVLYLFSRK (143 aa)). Residue H556 is the Tele-phosphohistidine intermediate; for EIIA activity of the active site. H556 is subject to Phosphohistidine; by HPr.

Homodimer. In terms of processing, an intramolecular phosphotransfer takes places between His-556 and Cys-385.

The protein localises to the cell inner membrane. The catalysed reaction is D-mannitol(out) + N(pros)-phospho-L-histidyl-[protein] = D-mannitol 1-phosphate(in) + L-histidyl-[protein]. The phosphoenolpyruvate-dependent sugar phosphotransferase system (sugar PTS), a major carbohydrate active transport system, catalyzes the phosphorylation of incoming sugar substrates concomitantly with their translocation across the cell membrane. This system is involved in D-mannitol transport. The polypeptide is PTS system mannitol-specific EIICBA component (mtlA) (Buchnera aphidicola subsp. Baizongia pistaciae (strain Bp)).